The sequence spans 607 residues: Elongation factor 4 (607 aa).

The 183-residue stretch at 11 to 193 (ENIRNFSIIA…KIVDVVPAPD (183 aa)) folds into the tr-type G domain. Residues 23–28 (DHGKST) and 140–143 (NKID) contribute to the GTP site.

Belongs to the TRAFAC class translation factor GTPase superfamily. Classic translation factor GTPase family. LepA subfamily.

The protein localises to the cell membrane. It catalyses the reaction GTP + H2O = GDP + phosphate + H(+). Required for accurate and efficient protein synthesis under certain stress conditions. May act as a fidelity factor of the translation reaction, by catalyzing a one-codon backward translocation of tRNAs on improperly translocated ribosomes. Back-translocation proceeds from a post-translocation (POST) complex to a pre-translocation (PRE) complex, thus giving elongation factor G a second chance to translocate the tRNAs correctly. Binds to ribosomes in a GTP-dependent manner. In Staphylococcus epidermidis (strain ATCC 35984 / DSM 28319 / BCRC 17069 / CCUG 31568 / BM 3577 / RP62A), this protein is Elongation factor 4.